Reading from the N-terminus, the 479-residue chain is Ribulose bisphosphate carboxylase large chain (479 aa).

Positions 1–2 (MS) are excised as a propeptide. Substrate-binding residues include N123 and T173. Residue K175 is the Proton acceptor of the active site. Residue K177 participates in substrate binding. Residues K201, D203, and E204 each contribute to the Mg(2+) site. K201 carries the N6-carboxylysine modification. S208 carries the post-translational modification Phosphoserine. H294 serves as the catalytic Proton acceptor. Residues R295 and H327 each contribute to the substrate site. Residue T330 is modified to Phosphothreonine. S379 lines the substrate pocket.

This sequence belongs to the RuBisCO large chain family. Type I subfamily. As to quaternary structure, heterohexadecamer of 8 large chains and 8 small chains; disulfide-linked. The disulfide link is formed within the large subunit homodimers. It depends on Mg(2+) as a cofactor. In terms of processing, the disulfide bond which can form in the large chain dimeric partners within the hexadecamer appears to be associated with oxidative stress and protein turnover.

Its subcellular location is the plastid. It is found in the chloroplast. The catalysed reaction is 2 (2R)-3-phosphoglycerate + 2 H(+) = D-ribulose 1,5-bisphosphate + CO2 + H2O. The enzyme catalyses D-ribulose 1,5-bisphosphate + O2 = 2-phosphoglycolate + (2R)-3-phosphoglycerate + 2 H(+). RuBisCO catalyzes two reactions: the carboxylation of D-ribulose 1,5-bisphosphate, the primary event in carbon dioxide fixation, as well as the oxidative fragmentation of the pentose substrate in the photorespiration process. Both reactions occur simultaneously and in competition at the same active site. The chain is Ribulose bisphosphate carboxylase large chain from Lobularia maritima (Sweet alyssum).